Reading from the N-terminus, the 141-residue chain is MSSRTIMAFDFGTKSIGSAIGQEITGTASPLKAFKAQDGTPNWDDIEKQIKEWQPDLIVVGLPTDLHGKELDVITPKAKKFANRLHGRFGNQVELHDERLSTVEARADLFEFGGYKALSKGNVDCQSAVVILESWFESQWG.

Belongs to the YqgF nuclease family.

It localises to the cytoplasm. In terms of biological role, could be a nuclease involved in processing of the 5'-end of pre-16S rRNA. This Aliivibrio salmonicida (strain LFI1238) (Vibrio salmonicida (strain LFI1238)) protein is Putative pre-16S rRNA nuclease.